Consider the following 504-residue polypeptide: Activin receptor type-1-like (504 aa).

Positions Met-1–Thr-20 are cleaved as a signal peptide. Topologically, residues Lys-21–Pro-121 are extracellular. N-linked (GlcNAc...) asparagine glycosylation occurs at Asn-34. Disulfide bonds link Cys-35-Cys-52, Cys-37-Cys-42, and Cys-47-Cys-70. The tract at residues Asn-74–Leu-77 is mediates specificity for BMP ligand. Intrachain disulfides connect Cys-78–Cys-90 and Cys-91–Cys-96. A glycan (N-linked (GlcNAc...) asparagine) is linked at Asn-99. The chain crosses the membrane as a helical span at residues Leu-122 to Trp-142. Over Arg-143–His-504 the chain is Cytoplasmic. A phosphoserine mark is found at Ser-156, Ser-161, and Ser-162. Residues Ser-173 to Gln-202 enclose the GS domain. Positions Val-203–His-504 constitute a Protein kinase domain. ATP contacts are provided by residues Val-209–Val-217 and Lys-230. Residue Asp-331 is the Proton acceptor of the active site.

Belongs to the protein kinase superfamily. TKL Ser/Thr protein kinase family. TGFB receptor subfamily. In terms of assembly, interacts with TSC22D1/TSC-22. It depends on Mg(2+) as a cofactor. Requires Mn(2+) as cofactor. Urogenital ridge, testis, ovary, brain and lung. In lung, found exclusively in pulmonary vessels of all sizes. Also expressed in aorta, vena cava and certain blood vessels of kidney, spleen, heart and intestine. For most blood vessels, a higher level of expression is found in endothelium than in adjacent smooth muscle.

It is found in the cell membrane. The enzyme catalyses L-threonyl-[receptor-protein] + ATP = O-phospho-L-threonyl-[receptor-protein] + ADP + H(+). It carries out the reaction L-seryl-[receptor-protein] + ATP = O-phospho-L-seryl-[receptor-protein] + ADP + H(+). In terms of biological role, type I receptor for TGF-beta family ligands BMP9/GDF2 and BMP10 and important regulator of normal blood vessel development. On ligand binding, forms a receptor complex consisting of two type II and two type I transmembrane serine/threonine kinases. Type II receptors phosphorylate and activate type I receptors which autophosphorylate, then bind and activate SMAD transcriptional regulators. May bind activin as well. The chain is Activin receptor type-1-like (Acvrl1) from Rattus norvegicus (Rat).